The following is a 145-amino-acid chain: Transcriptional regulator MraZ (145 aa).

SpoVT-AbrB domains lie at 7–54 and 83–126; these read NATN…GPDL and GVFM…QPQA.

It belongs to the MraZ family. Forms oligomers.

Its subcellular location is the cytoplasm. The protein localises to the nucleoid. This is Transcriptional regulator MraZ from Rhizobium johnstonii (strain DSM 114642 / LMG 32736 / 3841) (Rhizobium leguminosarum bv. viciae).